The sequence spans 662 residues: Intracellular exo-alpha-(1-&gt;5)-L-arabinofuranosidase (662 aa).

3 residues coordinate alpha-L-arabinofuranose: E27, N72, and N174. The active-site Proton donor/acceptor is the E175. Residues Y246, E294, and Q352 each coordinate alpha-L-arabinofuranose. The active-site Nucleophile is the E294. Disordered stretches follow at residues 454-483, 497-548, and 588-662; these read LADADPDARNTLAEPERVVPHPVDGTSLRD, SIRC…RTAR, and WTRW…ARRC. Residues 519-533 are compositionally biased toward low complexity; it reads TGTPPAAPPSSSSAP. The span at 537–547 shows a compositional bias: basic and acidic residues; sequence PTARRSPDRTA. 3 stretches are compositionally biased toward low complexity: residues 590 to 603, 628 to 641, and 649 to 662; these read RWAPAPRSGSPSRR, RRSPPGSAPGTPAP, and AGASRGAPRTARRC.

This sequence belongs to the glycosyl hydrolase 51 family. Homohexamer; trimer of dimers.

The protein resides in the cytoplasm. It carries out the reaction Hydrolysis of terminal non-reducing alpha-L-arabinofuranoside residues in alpha-L-arabinosides.. It functions in the pathway glycan metabolism; L-arabinan degradation. Its function is as follows. Involved in the degradation of arabinan and is a key enzyme in the complete degradation of the plant cell wall. Catalyzes the cleavage of terminal alpha-(1-&gt;5)-arabinofuranosyl bonds in different hemicellulosic homopolysaccharides (arabino-oligoxylosides, branched and debranched arabinans). It acts rapidly on the short-chain arabino-oligoxylosides from digestion of xylan with xylanases. It hydrolyzes slowly arabinan and arabinoxylan from wheat and rye flour. The sequence is that of Intracellular exo-alpha-(1-&gt;5)-L-arabinofuranosidase from Streptomyces lividans.